A 474-amino-acid chain; its full sequence is Zinc finger protein 230 (474 aa).

The KRAB domain occupies valine 8 to serine 76. Residues threonine 80–serine 167 form a KRNB region. 9 consecutive C2H2-type zinc fingers follow at residues histidine 168–histidine 190, serine 196–histidine 218, phenylalanine 224–histidine 246, tyrosine 252–histidine 274, phenylalanine 280–histidine 302, tyrosine 308–histidine 330, tyrosine 336–histidine 358, tyrosine 364–histidine 386, and tyrosine 392–histidine 414. The segment at phenylalanine 420 to histidine 442 adopts a C2H2-type 10; atypical zinc-finger fold.

The protein belongs to the krueppel C2H2-type zinc-finger protein family.

The protein resides in the nucleus. Functionally, may be involved in transcriptional regulation. The chain is Zinc finger protein 230 (ZNF230) from Homo sapiens (Human).